The chain runs to 213 residues: tRNA (guanine-N(7)-)-methyltransferase (213 aa).

Residues Glu44, Glu69, Asn96, and Asp118 each contribute to the S-adenosyl-L-methionine site. Asp118 is an active-site residue. A substrate-binding site is contributed by Lys122. An interaction with RNA region spans residues 124–129; the sequence is RHEKRR. Residues Asp154 and 192–195 each bind substrate; that span reads TEYE.

Belongs to the class I-like SAM-binding methyltransferase superfamily. TrmB family.

The catalysed reaction is guanosine(46) in tRNA + S-adenosyl-L-methionine = N(7)-methylguanosine(46) in tRNA + S-adenosyl-L-homocysteine. It participates in tRNA modification; N(7)-methylguanine-tRNA biosynthesis. Its function is as follows. Catalyzes the formation of N(7)-methylguanine at position 46 (m7G46) in tRNA. In Latilactobacillus sakei subsp. sakei (strain 23K) (Lactobacillus sakei subsp. sakei), this protein is tRNA (guanine-N(7)-)-methyltransferase.